Consider the following 497-residue polypeptide: Delayed-rectifier potassium channel regulatory subunit KCNS1 (497 aa).

Residues 1-186 are Cytoplasmic-facing; sequence MVSEFPGPGS…LTMENPGYSL (186 aa). A helical transmembrane segment spans residues 187–208; the sequence is PSKLFSCVSIGVVLASIAAMCI. At 209–239 the chain is on the extracellular side; it reads HSLPEYQAREAAAAVAAVAAGRSAEEVRDDP. A helical membrane pass occupies residues 240 to 262; that stretch reads VLRRLEYFCIAWFSFEVSSRLLL. Over 263-273 the chain is Cytoplasmic; it reads APSTRNFFCHP. Residues 274-291 form a helical membrane-spanning segment; the sequence is LNLIDIVSVLPFYLTLLA. Residues 292–309 lie on the Extracellular side of the membrane; the sequence is GAALGDQRGASGEELGDL. Residues 310 to 330 traverse the membrane as a helical; Voltage-sensor segment; it reads GKVVQVFRLMRIFRVLKLARH. Over 331-345 the chain is Cytoplasmic; it reads STGLRSLGATLKHSY. The helical transmembrane segment at 346–367 threads the bilayer; the sequence is REVGILLLYLAVGVSVFSGVAY. The Extracellular segment spans residues 368–379; sequence TAEEENEGFHTI. Residues 380-391 constitute an intramembrane region (helical); that stretch reads PACWWWGTVSMT. The short motif at 392–397 is the Selectivity filter element; that stretch reads TVGYGD. The stretch at 392–399 is an intramembrane region; the sequence is TVGYGDVV. Residues 400-406 are Extracellular-facing; that stretch reads PETVGGK. Residues 407 to 435 form a helical membrane-spanning segment; it reads LAASGCILGGILVVALPITIIFNKFSHFY. Over 436-497 the chain is Cytoplasmic; it reads RRQKALEAAV…PREPAKSHSY (62 aa). The segment at 464 to 497 is disordered; that stretch reads SDVSLETSRDTSQEGRSTDLETQAPREPAKSHSY. Basic and acidic residues predominate over residues 470–482; the sequence is TSRDTSQEGRSTD.

This sequence belongs to the potassium channel family. S (TC 1.A.1.2) subfamily. Kv9.1/KCNS1 sub-subfamily. As to quaternary structure, heterotetramer with KCNB1 and KCNB2. Does not form homomultimers. In terms of tissue distribution, detected in brain, but not in the other tissues tested. The highest levels of expression are in olfactory bulb, cerebral cortex, hippocampus, habenula, basolateral amygdaloid nuclei and cerebellum.

The protein localises to the cell membrane. Its function is as follows. Potassium channel regulatory subunit that modulate the delayed rectifier voltage-gated potassium channel activity of KCNB1 and KCNB2 by altering their kinetics, expression levels, and shifting the half-inactivation potential to more polarized values. While it does not form functional channels on its own, it can form functional heterotetrameric channels with KCNB1 and KCNB2. Each regulatory subunit has unique regulatory properties that can lead to extensive inhibition, significant changes in kinetics, and/or substantial shifts in the voltage dependencies of the inactivation process. The protein is Delayed-rectifier potassium channel regulatory subunit KCNS1 of Mus musculus (Mouse).